A 71-amino-acid chain; its full sequence is Vitellogenin-B1 (71 aa).

The signal sequence occupies residues 1–15 (MRGIILAQLLALAGS). The region spanning 24–71 (FSESKPYVYNYEGIILNGIPENGLARSGIKLNCKAEISGYAQRSYMLK) is the Vitellogenin domain.

As to expression, produced by the liver, secreted into the blood and then sequestered by receptor mediated endocytosis into growing oocytes, where it is generally cleaved, giving rise to the respective yolk components.

In terms of biological role, precursor of the major egg-yolk proteins that are sources of nutrients during early development of oviparous organisms. The polypeptide is Vitellogenin-B1 (Xenopus laevis (African clawed frog)).